A 66-amino-acid chain; its full sequence is Large ribosomal subunit protein bL35 (66 aa).

It belongs to the bacterial ribosomal protein bL35 family.

This is Large ribosomal subunit protein bL35 from Jannaschia sp. (strain CCS1).